A 692-amino-acid chain; its full sequence is DNA ligase (692 aa).

The span at 1–14 shows a compositional bias: polar residues; that stretch reads MQPDLFSTASQADA. The segment at 1-27 is disordered; the sequence is MQPDLFSTASQADANATPEEPDASNPA. Residues 54–58, 103–104, and E134 each bind NAD(+); these read DAEYD and SL. Catalysis depends on K136, which acts as the N6-AMP-lysine intermediate. Residues R157, E194, K311, and K335 each contribute to the NAD(+) site. Positions 429, 432, 447, and 454 each coordinate Zn(2+). Positions 612 to 692 constitute a BRCT domain; it reads NKPKPFAGKT…ALLQLLDTHE (81 aa).

Belongs to the NAD-dependent DNA ligase family. LigA subfamily. Mg(2+) serves as cofactor. Mn(2+) is required as a cofactor.

The enzyme catalyses NAD(+) + (deoxyribonucleotide)n-3'-hydroxyl + 5'-phospho-(deoxyribonucleotide)m = (deoxyribonucleotide)n+m + AMP + beta-nicotinamide D-nucleotide.. DNA ligase that catalyzes the formation of phosphodiester linkages between 5'-phosphoryl and 3'-hydroxyl groups in double-stranded DNA using NAD as a coenzyme and as the energy source for the reaction. It is essential for DNA replication and repair of damaged DNA. The protein is DNA ligase of Janthinobacterium sp. (strain Marseille) (Minibacterium massiliensis).